The chain runs to 452 residues: Mitochondrial import inner membrane translocase subunit TIM44 (452 aa).

A Phosphothreonine modification is found at T128. Residue 166 to 173 (GGEKLGRT) coordinates ATP. At S180 the chain carries Phosphoserine. N6-succinyllysine is present on K217.

Belongs to the Tim44 family. In terms of assembly, probable component of the PAM complex at least composed of a mitochondrial HSP70 protein, GRPEL1 or GRPEL2, TIMM44, TIMM16/PAM16 and TIMM14/DNAJC19. The complex interacts with the TIMM23 component of the TIM23 complex. Interacts with SLC25A4/ANT1 and SLC25A5/ANT2; leading to inhibit the presequence translocase TIMM23, thereby promoting stabilization of PINK1.

Its subcellular location is the mitochondrion inner membrane. The protein resides in the mitochondrion matrix. Essential component of the PAM complex, a complex required for the translocation of transit peptide-containing proteins from the inner membrane into the mitochondrial matrix in an ATP-dependent manner. Recruits mitochondrial HSP70 to drive protein translocation into the matrix using ATP as an energy source. In Homo sapiens (Human), this protein is Mitochondrial import inner membrane translocase subunit TIM44 (TIMM44).